The chain runs to 461 residues: Alpha-tubulin N-acetyltransferase 1 (461 aa).

The 188-residue stretch at 2–189 (VEFRFDIKPL…NNFVLYEGFF (188 aa)) folds into the N-acetyltransferase domain. Residues 123-136 (FYVH…GLGK) and 159-168 (SEKLLSFLSK) each bind acetyl-CoA. 3 disordered regions span residues 196–295 (NGGG…GNHD), 314–362 (NSYE…PEVA), and 418–443 (RPPG…SGGG). The span at 233 to 254 (RRGSQQQTTPNARLQQITQISP) shows a compositional bias: polar residues. The segment covering 283 to 293 (GSAEANSGNGN) has biased composition (low complexity). The segment covering 318–336 (PEPEVEPEPEPEPEPEPEP) has biased composition (acidic residues). A compositionally biased stretch (pro residues) spans 339–356 (ITPPSPPPKSHTPTPPSV). Residues 426-439 (SPGQDNTDAMSTVS) show a composition bias toward polar residues.

It belongs to the acetyltransferase ATAT1 family.

The catalysed reaction is L-lysyl-[alpha-tubulin] + acetyl-CoA = N(6)-acetyl-L-lysyl-[alpha-tubulin] + CoA + H(+). In terms of biological role, specifically acetylates 'Lys-40' in alpha-tubulin on the lumenal side of microtubules. Promotes microtubule destabilization and accelerates microtubule dynamics; this activity may be independent of acetylation activity. Acetylates alpha-tubulin with a slow enzymatic rate, due to a catalytic site that is not optimized for acetyl transfer. Enters the microtubule through each end and diffuses quickly throughout the lumen of microtubules. Acetylates only long/old microtubules because of its slow acetylation rate since it does not have time to act on dynamically unstable microtubules before the enzyme is released. Acetylates central spindle microtubules. The polypeptide is Alpha-tubulin N-acetyltransferase 1 (Drosophila melanogaster (Fruit fly)).